The following is a 229-amino-acid chain: Large ribosomal subunit protein uL1 (229 aa).

This sequence belongs to the universal ribosomal protein uL1 family. As to quaternary structure, part of the 50S ribosomal subunit.

Functionally, binds directly to 23S rRNA. The L1 stalk is quite mobile in the ribosome, and is involved in E site tRNA release. Its function is as follows. Protein L1 is also a translational repressor protein, it controls the translation of the L11 operon by binding to its mRNA. The chain is Large ribosomal subunit protein uL1 from Ureaplasma parvum serovar 3 (strain ATCC 27815 / 27 / NCTC 11736).